Reading from the N-terminus, the 432-residue chain is Adenylosuccinate synthetase (432 aa).

GTP contacts are provided by residues 13–19 (GDEGKGK) and 41–43 (GHT). Aspartate 14 serves as the catalytic Proton acceptor. Mg(2+) is bound by residues aspartate 14 and glycine 41. Residues 14-17 (DEGK), 39-42 (NAGH), threonine 130, arginine 144, glutamine 225, threonine 240, and arginine 304 contribute to the IMP site. Residue histidine 42 is the Proton donor of the active site. 300-306 (ATTGRRR) is a binding site for substrate. GTP is bound by residues arginine 306, 332 to 334 (KLD), and 415 to 417 (STG).

The protein belongs to the adenylosuccinate synthetase family. In terms of assembly, homodimer. Requires Mg(2+) as cofactor.

The protein localises to the cytoplasm. The enzyme catalyses IMP + L-aspartate + GTP = N(6)-(1,2-dicarboxyethyl)-AMP + GDP + phosphate + 2 H(+). Its pathway is purine metabolism; AMP biosynthesis via de novo pathway; AMP from IMP: step 1/2. Functionally, plays an important role in the de novo pathway of purine nucleotide biosynthesis. Catalyzes the first committed step in the biosynthesis of AMP from IMP. This Escherichia coli (strain K12) protein is Adenylosuccinate synthetase.